A 459-amino-acid polypeptide reads, in one-letter code: Nuclear distribution protein PAC1-2 (459 aa).

Residues 56-83 adopt a coiled-coil conformation; sequence TSIVRLQKKIMDLESRNAALQTELANLT. WD repeat units follow at residues 108-149, 151-191, 195-244, 246-284, 306-348, 350-389, 394-438, and 440-459; these read SHRD…RTVK, HTRA…KNIR, GHDH…KTLR, HTAWVRDVCPSFDGRFLLSAGDDMTTRLWNISGSNSDHK, QYLA…LGTL, GHDNWVRALAFHPGGKYLLSVSDDKTLRCWDLSQGGKCVK, AHER…DTPD, and QVRCVIATGGVDKKLQVFAD.

This sequence belongs to the WD repeat LIS1/nudF family. Self-associates. Interacts with NDL1 and dynein.

The protein resides in the cytoplasm. The protein localises to the cytoskeleton. It localises to the spindle pole. Its function is as follows. Positively regulates the activity of the minus-end directed microtubule motor protein dynein. May enhance dynein-mediated microtubule sliding by targeting dynein to the microtubule plus end. Required for nuclear migration during vegetative growth as well as development. Required for retrograde early endosome (EE) transport from the hyphal tip. Required for localization of dynein to the mitotic spindle poles. Recruits additional proteins to the dynein complex at SPBs. In Uncinocarpus reesii (strain UAMH 1704), this protein is Nuclear distribution protein PAC1-2.